The primary structure comprises 753 residues: 5-methyltetrahydropteroyltriglutamate--homocysteine methyltransferase (753 aa).

5-methyltetrahydropteroyltri-L-glutamate contacts are provided by residues 17 to 20 (RELK) and lysine 117. Residues 431–433 (IGS) and glutamate 484 each bind L-homocysteine. Residues 431-433 (IGS) and glutamate 484 contribute to the L-methionine site. 5-methyltetrahydropteroyltri-L-glutamate contacts are provided by residues 515 to 516 (RC) and tryptophan 561. Aspartate 599 contributes to the L-homocysteine binding site. Aspartate 599 serves as a coordination point for L-methionine. Glutamate 605 serves as a coordination point for 5-methyltetrahydropteroyltri-L-glutamate. Zn(2+) is bound by residues histidine 641, cysteine 643, and glutamate 665. The Proton donor role is filled by histidine 694. Residue cysteine 726 coordinates Zn(2+).

It belongs to the vitamin-B12 independent methionine synthase family. The cofactor is Zn(2+).

It carries out the reaction 5-methyltetrahydropteroyltri-L-glutamate + L-homocysteine = tetrahydropteroyltri-L-glutamate + L-methionine. The protein operates within amino-acid biosynthesis; L-methionine biosynthesis via de novo pathway; L-methionine from L-homocysteine (MetE route): step 1/1. Its function is as follows. Catalyzes the transfer of a methyl group from 5-methyltetrahydrofolate to homocysteine resulting in methionine formation. This chain is 5-methyltetrahydropteroyltriglutamate--homocysteine methyltransferase, found in Escherichia coli O1:K1 / APEC.